A 677-amino-acid chain; its full sequence is Methionine--tRNA ligase (677 aa).

The short motif at 15-25 (PYANGSIHLGH) is the 'HIGH' region element. Zn(2+)-binding residues include Cys-146, Cys-149, Cys-159, and Cys-162. The 'KMSKS' region signature appears at 333-337 (KMSKS). Lys-336 contacts ATP. A tRNA-binding domain is found at 575-677 (DFAKVDLRVA…AGAKPGHQVK (103 aa)).

Belongs to the class-I aminoacyl-tRNA synthetase family. MetG type 1 subfamily. In terms of assembly, homodimer. It depends on Zn(2+) as a cofactor.

The protein resides in the cytoplasm. The enzyme catalyses tRNA(Met) + L-methionine + ATP = L-methionyl-tRNA(Met) + AMP + diphosphate. Functionally, is required not only for elongation of protein synthesis but also for the initiation of all mRNA translation through initiator tRNA(fMet) aminoacylation. In Shigella boydii serotype 18 (strain CDC 3083-94 / BS512), this protein is Methionine--tRNA ligase.